The sequence spans 225 residues: tRNA (guanine-N(1)-)-methyltransferase (225 aa).

Residues Gly-110 and 130–135 (VGDYVL) each bind S-adenosyl-L-methionine.

The protein belongs to the RNA methyltransferase TrmD family. As to quaternary structure, homodimer.

It localises to the cytoplasm. It carries out the reaction guanosine(37) in tRNA + S-adenosyl-L-methionine = N(1)-methylguanosine(37) in tRNA + S-adenosyl-L-homocysteine + H(+). Its function is as follows. Specifically methylates guanosine-37 in various tRNAs. The polypeptide is tRNA (guanine-N(1)-)-methyltransferase (Neorickettsia sennetsu (strain ATCC VR-367 / Miyayama) (Ehrlichia sennetsu)).